The sequence spans 262 residues: Ribosomal RNA small subunit methyltransferase A (262 aa).

Residues N13, L15, G40, E61, D85, and N105 each coordinate S-adenosyl-L-methionine.

It belongs to the class I-like SAM-binding methyltransferase superfamily. rRNA adenine N(6)-methyltransferase family. RsmA subfamily.

The protein localises to the cytoplasm. It catalyses the reaction adenosine(1518)/adenosine(1519) in 16S rRNA + 4 S-adenosyl-L-methionine = N(6)-dimethyladenosine(1518)/N(6)-dimethyladenosine(1519) in 16S rRNA + 4 S-adenosyl-L-homocysteine + 4 H(+). In terms of biological role, specifically dimethylates two adjacent adenosines (A1518 and A1519) in the loop of a conserved hairpin near the 3'-end of 16S rRNA in the 30S particle. May play a critical role in biogenesis of 30S subunits. The chain is Ribosomal RNA small subunit methyltransferase A from Laribacter hongkongensis (strain HLHK9).